The primary structure comprises 208 residues: Holliday junction resolvase RecU (208 aa).

The segment at M1 to S25 is disordered. Positions 87, 89, 102, and 121 each coordinate Mg(2+).

Belongs to the RecU family. Requires Mg(2+) as cofactor.

It is found in the cytoplasm. The catalysed reaction is Endonucleolytic cleavage at a junction such as a reciprocal single-stranded crossover between two homologous DNA duplexes (Holliday junction).. In terms of biological role, endonuclease that resolves Holliday junction intermediates in genetic recombination. Cleaves mobile four-strand junctions by introducing symmetrical nicks in paired strands. Promotes annealing of linear ssDNA with homologous dsDNA. Required for DNA repair, homologous recombination and chromosome segregation. This Staphylococcus carnosus (strain TM300) protein is Holliday junction resolvase RecU.